Here is an 865-residue protein sequence, read N- to C-terminus: Fatty acyl-CoA synthetase and RNA processing-associated kinase 1 (865 aa).

Residues 41–313 enclose the Protein kinase domain; it reads YILGSTLGEG…LKQIKKHEWL (273 aa). Residues 47-55 and lysine 80 each bind ATP; that span reads LGEGEFGKV. The active-site Proton acceptor is the aspartate 175. A disordered region spans residues 341-398; it reads KPRRRYGSRPQSSCSTSSLGSRSDKRDSLVIDSTLITFPAPPQESQNHIITRPASIAS. A compositionally biased stretch (low complexity) spans 352-361; the sequence is SSCSTSSLGS. Residue serine 441 is modified to Phosphoserine. Disordered stretches follow at residues 480–554, 673–733, and 754–782; these read ISGS…YTTP, TEES…LNEA, and SLYS…YQTN. Residues 494–538 are compositionally biased toward polar residues; the sequence is STTMQTSKIQPNNMASSQNHQYNKNKTQNSLQSAKNFYRTSSSSH. Composition is skewed to basic and acidic residues over residues 690 to 708 and 724 to 733; these read EGQE…EKGS and NHLERSLNEA.

It belongs to the protein kinase superfamily. Ser/Thr protein kinase family. In terms of assembly, interacts with FAA3, POL5 and TPA1.

It is found in the cytoplasm. It catalyses the reaction L-seryl-[protein] + ATP = O-phospho-L-seryl-[protein] + ADP + H(+). The enzyme catalyses L-threonyl-[protein] + ATP = O-phospho-L-threonyl-[protein] + ADP + H(+). Putative serine/threonine-protein kinase that may be involved in rRNA transcription and ribosome biogenesis. The sequence is that of Fatty acyl-CoA synthetase and RNA processing-associated kinase 1 (FRK1) from Saccharomyces cerevisiae (strain ATCC 204508 / S288c) (Baker's yeast).